A 113-amino-acid polypeptide reads, in one-letter code: Stigma/stylar cysteine-rich adhesin (113 aa).

The signal sequence occupies residues 1–22; sequence MARSSAVCFLLLLAFLIGTASA. 4 disulfide bridges follow: Cys-25–Cys-72, Cys-35–Cys-49, Cys-50–Cys-95, and Cys-70–Cys-109.

This sequence belongs to the plant LTP family. As to expression, highly expressed in style and stigma, abundant in young leaves and petals, and low expression in young anthers at pollen mother cell stage with an active tapetum. Not expressed in mature leaves or in pollen grains or tubes. Found in the stylar transmitting tract epidermis and in the stylar extracellular matrix.

Functionally, acts as an adhesive agent between the pollen tube wall and the stylar transmitting tract epidermis. Binds a stylar pectin in a pH-dependent manner. Enhances activity of chemocyanin, a diffusible chemotropic factor. The chain is Stigma/stylar cysteine-rich adhesin (SCA) from Lilium longiflorum (Trumpet lily).